The following is a 551-amino-acid chain: Terpene synthase 10 (551 aa).

Positions 303, 307, and 455 each coordinate Mg(2+). Residues 303–307 carry the DDXXD motif motif; the sequence is DDIYD.

It belongs to the terpene synthase family. Requires Mg(2+) as cofactor.

Its function is as follows. Catalyzes the cyclization of farnesyl diphosphate to sesquiterpene olefins. The sequence is that of Terpene synthase 10 (TPS10) from Ricinus communis (Castor bean).